A 309-amino-acid chain; its full sequence is NAD kinase 2 (309 aa).

Catalysis depends on Asp-81, which acts as the Proton acceptor. Residues 81–82 (DG), 155–156 (NE), Asp-185, 196–201 (TAYALS), and Asn-255 each bind NAD(+).

Belongs to the NAD kinase family. Requires a divalent metal cation as cofactor.

The protein localises to the cytoplasm. It catalyses the reaction NAD(+) + ATP = ADP + NADP(+) + H(+). In terms of biological role, involved in the regulation of the intracellular balance of NAD and NADP, and is a key enzyme in the biosynthesis of NADP. Catalyzes specifically the phosphorylation on 2'-hydroxyl of the adenosine moiety of NAD to yield NADP. This Gloeobacter violaceus (strain ATCC 29082 / PCC 7421) protein is NAD kinase 2.